The following is a 196-amino-acid chain: Putative 3-methyladenine DNA glycosylase (196 aa).

This sequence belongs to the DNA glycosylase MPG family.

This chain is Putative 3-methyladenine DNA glycosylase, found in Chlamydia pneumoniae (Chlamydophila pneumoniae).